The primary structure comprises 210 residues: Large ribosomal subunit protein uL3 (210 aa).

A disordered region spans residues 126-150 (VSATHGSHRNHRKPGSVGASSTPSR).

Belongs to the universal ribosomal protein uL3 family. As to quaternary structure, part of the 50S ribosomal subunit. Forms a cluster with proteins L14 and L19.

In terms of biological role, one of the primary rRNA binding proteins, it binds directly near the 3'-end of the 23S rRNA, where it nucleates assembly of the 50S subunit. This is Large ribosomal subunit protein uL3 from Tropheryma whipplei (strain TW08/27) (Whipple's bacillus).